The sequence spans 763 residues: Thiamine biosynthesis multifunctional protein ThiED (763 aa).

Residues 1-210 form a thiamine-phosphate synthase region; it reads MTDFSLYLVT…ANPAAAATRL (210 aa). 4-amino-2-methyl-5-(diphosphooxymethyl)pyrimidine is bound by residues 37–41 and Asn-69; that span reads QLRDK. Residues Asp-70 and Asp-88 each contribute to the Mg(2+) site. Ser-107 contacts 4-amino-2-methyl-5-(diphosphooxymethyl)pyrimidine. A 2-[(2R,5Z)-2-carboxy-4-methylthiazol-5(2H)-ylidene]ethyl phosphate-binding site is contributed by 140-142; that stretch reads TAT. Lys-143 serves as a coordination point for 4-amino-2-methyl-5-(diphosphooxymethyl)pyrimidine. Residues Gly-174 and 194–195 contribute to the 2-[(2R,5Z)-2-carboxy-4-methylthiazol-5(2H)-ylidene]ethyl phosphate site; that span reads VS. The interval 245-500 is hydroxymethylpyrimidine/phosphomethylpyrimidine kinase; that stretch reads LSIAGTDPTG…GTGNGPVDHG (256 aa). A 4-amino-5-hydroxymethyl-2-methylpyrimidine-binding site is contributed by Gln-282. A thiaminase-2 region spans residues 550–763; that stretch reads FTRALWEASG…RHGWTMVGSS (214 aa).

The protein in the N-terminal section; belongs to the thiamine-phosphate synthase family. It in the central section; belongs to the ThiD family. In the C-terminal section; belongs to the thiaminase-2 family. The cofactor is Mg(2+).

It catalyses the reaction 2-[(2R,5Z)-2-carboxy-4-methylthiazol-5(2H)-ylidene]ethyl phosphate + 4-amino-2-methyl-5-(diphosphooxymethyl)pyrimidine + 2 H(+) = thiamine phosphate + CO2 + diphosphate. The enzyme catalyses 2-(2-carboxy-4-methylthiazol-5-yl)ethyl phosphate + 4-amino-2-methyl-5-(diphosphooxymethyl)pyrimidine + 2 H(+) = thiamine phosphate + CO2 + diphosphate. It carries out the reaction 4-methyl-5-(2-phosphooxyethyl)-thiazole + 4-amino-2-methyl-5-(diphosphooxymethyl)pyrimidine + H(+) = thiamine phosphate + diphosphate. The catalysed reaction is 4-amino-5-hydroxymethyl-2-methylpyrimidine + ATP = 4-amino-2-methyl-5-(phosphooxymethyl)pyrimidine + ADP + H(+). It catalyses the reaction 4-amino-2-methyl-5-(phosphooxymethyl)pyrimidine + ATP = 4-amino-2-methyl-5-(diphosphooxymethyl)pyrimidine + ADP. It functions in the pathway cofactor biosynthesis; thiamine diphosphate biosynthesis; 4-amino-2-methyl-5-diphosphomethylpyrimidine from 5-amino-1-(5-phospho-D-ribosyl)imidazole: step 3/3. It participates in cofactor biosynthesis; thiamine diphosphate biosynthesis; thiamine phosphate from 4-amino-2-methyl-5-diphosphomethylpyrimidine and 4-methyl-5-(2-phosphoethyl)-thiazole: step 1/1. Functionally, condenses 4-methyl-5-(beta-hydroxyethyl)thiazole monophosphate (THZ-P) and 2-methyl-4-amino-5-hydroxymethyl pyrimidine pyrophosphate (HMP-PP) to form thiamine monophosphate (TMP). Its function is as follows. Catalyzes the phosphorylation of hydroxymethylpyrimidine phosphate (HMP-P) to HMP-PP, and of HMP to HMP-P. This Corynebacterium glutamicum (strain ATCC 13032 / DSM 20300 / JCM 1318 / BCRC 11384 / CCUG 27702 / LMG 3730 / NBRC 12168 / NCIMB 10025 / NRRL B-2784 / 534) protein is Thiamine biosynthesis multifunctional protein ThiED (theD).